The chain runs to 1009 residues: Anillin-like protein 2 (1009 aa).

Disordered stretches follow at residues 1-29 (MYRRENINFSHPPQLKSPPPMSSPLDSNR), 272-295 (FGQEESVRASPMSRRNRRGTQTIV), and 539-558 (GTGYSASSSGPQFTRSPTLV). Polar residues predominate over residues 542–557 (YSASSSGPQFTRSPTL). The stretch at 626–657 (SAADKINDSKRQISKLIETIEKTRKHIQLAEI) forms a coiled coil. In terms of domain architecture, PH spans 892-1005 (DVEYRGFLYL…WLNAINDTLF (114 aa)).

As to expression, localizes to the surface of the rachis.

Required to maintain the structure of the rachis, the central cytoplasmic core of the syncytial adult gonad. Failure to maintain the rachis leads to premature dissociation of oocytes and thereby impedes oogenesis. This Caenorhabditis elegans protein is Anillin-like protein 2 (ani-2).